Here is a 75-residue protein sequence, read N- to C-terminus: Small ribosomal subunit protein bS18 (75 aa).

This sequence belongs to the bacterial ribosomal protein bS18 family. Part of the 30S ribosomal subunit. Forms a tight heterodimer with protein bS6.

Its function is as follows. Binds as a heterodimer with protein bS6 to the central domain of the 16S rRNA, where it helps stabilize the platform of the 30S subunit. This Mycoplasma capricolum subsp. capricolum (strain California kid / ATCC 27343 / NCTC 10154) protein is Small ribosomal subunit protein bS18.